The sequence spans 920 residues: Protein FAN (920 aa).

Residues 176 to 247 (RLARTSFDKN…QDVRRIYKRR (72 aa)) enclose the GRAM domain. Residues 189-286 (SVSEKLHMEC…DRDDLYFYIA (98 aa)) form the BEACH-type PH domain. The region spanning 290 to 575 (EHHAAEHTAE…QLFVTPHPRR (286 aa)) is the BEACH domain. WD repeat units follow at residues 631–661 (IHKEAVTGIAVSCNGSSVFTTSQDSTLKMFS), 673–703 (FSNMALSSCLLLPGDTTVISSSWDNNVYFYS), 715–743 (GHDDAVSKICWHNDRLYSGSWDSTVKVWS), 764–794 (EHDVSVNTINLNAVSTLLVSGTKEGMVNIWD), 806–836 (CHSGTVCDAAFSPDSRHILSTGVDGCLNVID), and 887–917 (GHTGAVTCMWMNEQCSSIITGGEDRQIMFWK).

Functionally, couples the p55 TNF-receptor (TNF-R55 / TNFR1) to neutral sphingomyelinase (N-SMASE). Specifically binds to the N-smase activation domain of TNF-R55. May regulate ceramide production by N-SMASE. The protein is Protein FAN (Nsmaf) of Mus musculus (Mouse).